The following is a 411-amino-acid chain: Arginine deiminase (411 aa).

Catalysis depends on C401, which acts as the Amidino-cysteine intermediate.

Belongs to the arginine deiminase family.

It is found in the cytoplasm. The catalysed reaction is L-arginine + H2O = L-citrulline + NH4(+). Its pathway is amino-acid degradation; L-arginine degradation via ADI pathway; carbamoyl phosphate from L-arginine: step 1/2. This Staphylococcus aureus (strain MRSA252) protein is Arginine deiminase.